Consider the following 317-residue polypeptide: MTCKIIGCGGYLPPKVVSNDELAKFVDTNDEWIRTRTGISQRHIAGDTEYTSHIALKAAEKAIADADISVNEIDLIITCTTTPDNSFPSVATKLQSYLGLNNVPSFDLQAVCAGFVYGVQVANSLISSGKYKTILLIGAEKMTSLLDWEDRATCVLFGDGAGSVILQRSDDNSGIIDSNIFSSGADYEILYTNGGVSMNGSSGKIIMQGQKLFRLAVEKMHQSIEELLRNNNFTVNDIDYFIPHQANVRIINKLAELLNVEDHKVVKTVEKHANCSAASIPLALSTIKASGKIKKGDIILFSAIGAGLTWGSALLRW.

Residues Cys112 and His244 contribute to the active site. The segment at 245–249 is ACP-binding; it reads QANVR. Asn274 is a catalytic residue.

The protein belongs to the thiolase-like superfamily. FabH family. As to quaternary structure, homodimer.

The protein resides in the cytoplasm. The enzyme catalyses malonyl-[ACP] + acetyl-CoA + H(+) = 3-oxobutanoyl-[ACP] + CO2 + CoA. Its pathway is lipid metabolism; fatty acid biosynthesis. Catalyzes the condensation reaction of fatty acid synthesis by the addition to an acyl acceptor of two carbons from malonyl-ACP. Catalyzes the first condensation reaction which initiates fatty acid synthesis and may therefore play a role in governing the total rate of fatty acid production. Possesses both acetoacetyl-ACP synthase and acetyl transacylase activities. Its substrate specificity determines the biosynthesis of branched-chain and/or straight-chain of fatty acids. This is Beta-ketoacyl-[acyl-carrier-protein] synthase III from Rickettsia bellii (strain OSU 85-389).